We begin with the raw amino-acid sequence, 299 residues long: Acetylglutamate kinase (299 aa).

Substrate contacts are provided by residues 70–71 (GG), Arg92, and Asn197.

Belongs to the acetylglutamate kinase family. ArgB subfamily.

It localises to the cytoplasm. It catalyses the reaction N-acetyl-L-glutamate + ATP = N-acetyl-L-glutamyl 5-phosphate + ADP. The protein operates within amino-acid biosynthesis; L-arginine biosynthesis; N(2)-acetyl-L-ornithine from L-glutamate: step 2/4. Functionally, catalyzes the ATP-dependent phosphorylation of N-acetyl-L-glutamate. This chain is Acetylglutamate kinase, found in Acidiphilium cryptum (strain JF-5).